Here is a 421-residue protein sequence, read N- to C-terminus: Thymidine phosphorylase (421 aa).

This sequence belongs to the thymidine/pyrimidine-nucleoside phosphorylase family. In terms of assembly, homodimer.

The catalysed reaction is thymidine + phosphate = 2-deoxy-alpha-D-ribose 1-phosphate + thymine. Functionally, the enzymes which catalyze the reversible phosphorolysis of pyrimidine nucleosides are involved in the degradation of these compounds and in their utilization as carbon and energy sources, or in the rescue of pyrimidine bases for nucleotide synthesis. The protein is Thymidine phosphorylase (deoA) of Mycoplasma pneumoniae (strain ATCC 29342 / M129 / Subtype 1) (Mycoplasmoides pneumoniae).